An 815-amino-acid chain; its full sequence is Subtilisin-like protease SBT2.5 (815 aa).

Positions 1–19 are cleaved as a signal peptide; sequence MDIGLRIFVVFVLLVAVTA. The Inhibitor I9 domain occupies 21-124; the sequence is VYIVTMEGDP…RSVDKDWKVR (104 aa). Positions 120–671 constitute a Peptidase S8 domain; sequence DWKVRRLTTH…SGHVNPSAAL (552 aa). Residues Asp-160 and His-234 each act as charge relay system in the active site. Residues 397 to 501 form the PA domain; sequence TLVSANDVLL…VSKSMDLIDY (105 aa). Residues Asn-503 and Asn-577 are each glycosylated (N-linked (GlcNAc...) asparagine). The Charge relay system role is filled by Ser-596. Residue Asn-701 is glycosylated (N-linked (GlcNAc...) asparagine).

The protein belongs to the peptidase S8 family. As to expression, expressed in roots, leaves and flowers of mature plants.

The sequence is that of Subtilisin-like protease SBT2.5 from Arabidopsis thaliana (Mouse-ear cress).